The primary structure comprises 370 residues: Glutamine synthetase (370 aa).

A2 is modified (N-acetylalanine). S5 carries the phosphoserine modification. The region spanning I24 to G103 is the GS beta-grasp domain. The GS catalytic domain occupies H110–S370. Glycyl lysine isopeptide (Lys-Gly) (interchain with G-Cter in ubiquitin) cross-links involve residues K283, K324, and K363.

Belongs to the glutamine synthetase family. Homooctamer.

It is found in the cytoplasm. It catalyses the reaction L-glutamate + NH4(+) + ATP = L-glutamine + ADP + phosphate + H(+). The protein is Glutamine synthetase (GLN1) of Saccharomyces cerevisiae (strain ATCC 204508 / S288c) (Baker's yeast).